The sequence spans 104 residues: Protamine-3 (104 aa).

The disordered stretch occupies residues 1–104 (MGSRCAKLST…PSPEPKQKHS (104 aa)). The span at 45-70 (EGEEEEEDEEDEEEEDDDEEDEEEEQ) shows a compositional bias: acidic residues. S96 is modified (phosphoserine).

The protein belongs to the protamine P3 family. In terms of tissue distribution, testis.

The protein localises to the nucleus. The protein resides in the chromosome. Protamines substitute for histones in the chromatin of sperm during the haploid phase of spermatogenesis. They compact sperm DNA into a highly condensed, stable and inactive complex. The polypeptide is Protamine-3 (Prm3) (Rattus norvegicus (Rat)).